A 443-amino-acid polypeptide reads, in one-letter code: Probable glycine dehydrogenase (decarboxylating) subunit 1 (443 aa).

This sequence belongs to the GcvP family. N-terminal subunit subfamily. In terms of assembly, the glycine cleavage system is composed of four proteins: P, T, L and H. In this organism, the P 'protein' is a heterodimer of two subunits.

It catalyses the reaction N(6)-[(R)-lipoyl]-L-lysyl-[glycine-cleavage complex H protein] + glycine + H(+) = N(6)-[(R)-S(8)-aminomethyldihydrolipoyl]-L-lysyl-[glycine-cleavage complex H protein] + CO2. In terms of biological role, the glycine cleavage system catalyzes the degradation of glycine. The P protein binds the alpha-amino group of glycine through its pyridoxal phosphate cofactor; CO(2) is released and the remaining methylamine moiety is then transferred to the lipoamide cofactor of the H protein. The polypeptide is Probable glycine dehydrogenase (decarboxylating) subunit 1 (Chlorobium limicola (strain DSM 245 / NBRC 103803 / 6330)).